The sequence spans 257 residues: UPF0246 protein Spro_0686 (257 aa).

It belongs to the UPF0246 family.

The polypeptide is UPF0246 protein Spro_0686 (Serratia proteamaculans (strain 568)).